We begin with the raw amino-acid sequence, 525 residues long: Bifunctional purine biosynthesis protein PurH (525 aa).

The MGS-like domain maps to 1 to 148 (MPSNNLIKNA…KNYKNVIVIV (148 aa)).

This sequence belongs to the PurH family.

The catalysed reaction is (6R)-10-formyltetrahydrofolate + 5-amino-1-(5-phospho-beta-D-ribosyl)imidazole-4-carboxamide = 5-formamido-1-(5-phospho-D-ribosyl)imidazole-4-carboxamide + (6S)-5,6,7,8-tetrahydrofolate. It carries out the reaction IMP + H2O = 5-formamido-1-(5-phospho-D-ribosyl)imidazole-4-carboxamide. It functions in the pathway purine metabolism; IMP biosynthesis via de novo pathway; 5-formamido-1-(5-phospho-D-ribosyl)imidazole-4-carboxamide from 5-amino-1-(5-phospho-D-ribosyl)imidazole-4-carboxamide (10-formyl THF route): step 1/1. The protein operates within purine metabolism; IMP biosynthesis via de novo pathway; IMP from 5-formamido-1-(5-phospho-D-ribosyl)imidazole-4-carboxamide: step 1/1. This is Bifunctional purine biosynthesis protein PurH from Buchnera aphidicola subsp. Acyrthosiphon pisum (strain APS) (Acyrthosiphon pisum symbiotic bacterium).